Here is a 212-residue protein sequence, read N- to C-terminus: Nuclear phosphoprotein UL3 homolog (212 aa).

It belongs to the alphaherpesvirinae HHV-1 UL3 family. In terms of processing, phosphorylated.

The protein localises to the host nucleus. The sequence is that of Nuclear phosphoprotein UL3 homolog from Equus caballus (Horse).